Reading from the N-terminus, the 303-residue chain is Kanosamine kinase (303 aa).

It belongs to the ROK (NagC/XylR) family.

It carries out the reaction kanosamine + ATP = D-kanosamine 6-phosphate + ADP + H(+). It functions in the pathway antibiotic biosynthesis; rifamycin B biosynthesis. Its activity is regulated as follows. Inhibited by Zn(2+), Cu(2+), and Fe(2+). Its function is as follows. Involved in the biosynthesis of 3-amino-5-hydroxybenzoate (AHBA), a compound that then serves as the starter unit for the assembly of a polyketide during the biosynthesis of rifamycin B and other ansamycin antibiotics. Catalyzes only the phosphorylation of kanosamine to yield kanosamine 6-phosphate. The sequence is that of Kanosamine kinase (rifN) from Amycolatopsis mediterranei (strain S699) (Nocardia mediterranei).